A 187-amino-acid polypeptide reads, in one-letter code: Pterin-4-alpha-carbinolamine dehydratase 2, mitochondrial (187 aa).

The transit peptide at 1–33 (MSRLLLPKLFSISRTQVPAASLFNNLYRRHKRF) directs the protein to the mitochondrion.

This sequence belongs to the pterin-4-alpha-carbinolamine dehydratase family.

The protein localises to the mitochondrion. The enzyme catalyses (4aS,6R)-4a-hydroxy-L-erythro-5,6,7,8-tetrahydrobiopterin = (6R)-L-erythro-6,7-dihydrobiopterin + H2O. Involved in tetrahydrobiopterin biosynthesis. Possesses pterin-4-alpha-carbinolamine dehydratase activity when expressed in a bacterial heterolgous system. The chain is Pterin-4-alpha-carbinolamine dehydratase 2, mitochondrial from Arabidopsis thaliana (Mouse-ear cress).